The chain runs to 128 residues: Large ribosomal subunit protein uL22 (128 aa).

It belongs to the universal ribosomal protein uL22 family. In terms of assembly, part of the 50S ribosomal subunit.

Functionally, this protein binds specifically to 23S rRNA; its binding is stimulated by other ribosomal proteins, e.g. L4, L17, and L20. It is important during the early stages of 50S assembly. It makes multiple contacts with different domains of the 23S rRNA in the assembled 50S subunit and ribosome. In terms of biological role, the globular domain of the protein is located near the polypeptide exit tunnel on the outside of the subunit, while an extended beta-hairpin is found that lines the wall of the exit tunnel in the center of the 70S ribosome. The chain is Large ribosomal subunit protein uL22 from Rhodopseudomonas palustris (strain BisA53).